The chain runs to 330 residues: RNA polymerase sigma factor RpoS (330 aa).

Residues 56 to 89 (DATQLYLGEIGYSPLLTAEEEVYFARRALRGDVA) form a sigma-70 factor domain-1 region. The interval 94 to 164 (MIESNLRLVV…ERAIMNQTRT (71 aa)) is sigma-70 factor domain-2. Positions 118–121 (DLIE) match the Interaction with polymerase core subunit RpoC motif. Positions 174–249 (ELNVYLRTAR…DEKENGPEDT (76 aa)) are sigma-70 factor domain-3. The sigma-70 factor domain-4 stretch occupies residues 262-315 (WLFELNAKQREVLARRFGLLGYEAATLEDVGREIGLTRERVRQIQVEGLRRLRE). Residues 288 to 307 (LEDVGREIGLTRERVRQIQV) constitute a DNA-binding region (H-T-H motif).

The protein belongs to the sigma-70 factor family. RpoS subfamily. In terms of assembly, interacts with the RNA polymerase core enzyme.

Its subcellular location is the cytoplasm. Its function is as follows. Sigma factors are initiation factors that promote the attachment of RNA polymerase to specific initiation sites and are then released. This sigma factor is the master transcriptional regulator of the stationary phase and the general stress response. In Shigella flexneri, this protein is RNA polymerase sigma factor RpoS.